Consider the following 155-residue polypeptide: Ribonuclease H (155 aa).

An RNase H type-1 domain is found at 4-145; that stretch reads DISKVVIYTD…ADKLAVQGRQ (142 aa). Mg(2+) contacts are provided by Asp-13, Glu-51, Asp-73, and Asp-137.

It belongs to the RNase H family. As to quaternary structure, monomer. Mg(2+) serves as cofactor.

It is found in the cytoplasm. The enzyme catalyses Endonucleolytic cleavage to 5'-phosphomonoester.. Its function is as follows. Endonuclease that specifically degrades the RNA of RNA-DNA hybrids. The polypeptide is Ribonuclease H (Rickettsia bellii (strain RML369-C)).